The primary structure comprises 521 residues: Type II methyltransferase M.AluI (521 aa).

The SAM-dependent MTase C5-type domain maps to 8–491 (YSFVDLFAGI…REHVRRDRAL (484 aa)). C84 is a catalytic residue.

The protein belongs to the class I-like SAM-binding methyltransferase superfamily. C5-methyltransferase family.

It catalyses the reaction a 2'-deoxycytidine in DNA + S-adenosyl-L-methionine = a 5-methyl-2'-deoxycytidine in DNA + S-adenosyl-L-homocysteine + H(+). Functionally, a methylase, recognizes the double-stranded sequence 5'-AGCT-3', methylates C-3 on both strands, and protects the DNA from cleavage by the AluI endonuclease. The protein is Type II methyltransferase M.AluI of Cellulosimicrobium cellulans (Arthrobacter luteus).